We begin with the raw amino-acid sequence, 459 residues long: Probable acetate kinase (459 aa).

N9 lines the Mg(2+) pocket. K16 contributes to the ATP binding site. R100 lines the substrate pocket. D156 functions as the Proton donor/acceptor in the catalytic mechanism. ATP is bound by residues 216 to 220 (HLGSG) and 299 to 301 (DFR). The interval 308-338 (TTTSSPTPSPNPNPNPNPDPNPDPNPDPQNQ) is disordered. Positions 314–334 (TPSPNPNPNPNPDPNPDPNPD) are enriched in pro residues. A Mg(2+)-binding site is contributed by E441.

It belongs to the acetokinase family. Mg(2+) is required as a cofactor.

The catalysed reaction is acetate + ATP = acetyl phosphate + ADP. It participates in metabolic intermediate biosynthesis; acetyl-CoA biosynthesis; acetyl-CoA from acetate: step 1/2. In Chaetomium globosum (strain ATCC 6205 / CBS 148.51 / DSM 1962 / NBRC 6347 / NRRL 1970) (Soil fungus), this protein is Probable acetate kinase.